A 420-amino-acid polypeptide reads, in one-letter code: MSNVRYISNLTRETYALILAGGRGSRLHELTDWRAKPALYFGGKFRIIDFPLSNCINSGIRRVGVVTQYKSHSLIRHVMRGWGHFKKELGESVEILPASQRYSENWYQGTADAVFQNIDIIRHELPKYVMVLSGDHVYRMDYAGLLAAHAESGADMTVSCLEVPIAEAAGSFGVMEVDEEMRILGFEEKPQQPKHSPGNPEMCLASMGNYVFNTEFLFDQLKKDALNESSDRDFGKDIIPAIIEKHNVFAYPFKSAFPNEQAYWRDVGTLDSFWQANMELLSPTPALNLYDAKWPIWTFQEQLPPAKFVFDDDDRRGMALDSIVSGGCIISGATVRRSVLFNEVRVCSYSLVEDSVVLPDVVVLRHCKIKNAILDRGCIIPEGMVIGYNHDHDRAKGFRVSEKGVTLVTRDMLGLPVGYE.

Residues Y107, G173, 188–189, and S206 contribute to the alpha-D-glucose 1-phosphate site; that span reads EK.

It belongs to the bacterial/plant glucose-1-phosphate adenylyltransferase family. In terms of assembly, homotetramer.

The catalysed reaction is alpha-D-glucose 1-phosphate + ATP + H(+) = ADP-alpha-D-glucose + diphosphate. It participates in glycan biosynthesis; glycogen biosynthesis. In terms of biological role, involved in the biosynthesis of ADP-glucose, a building block required for the elongation reactions to produce glycogen. Catalyzes the reaction between ATP and alpha-D-glucose 1-phosphate (G1P) to produce pyrophosphate and ADP-Glc. The polypeptide is Glucose-1-phosphate adenylyltransferase (Shewanella baltica (strain OS185)).